A 554-amino-acid polypeptide reads, in one-letter code: DDB1- and CUL4-associated factor 11 homolog (554 aa).

Positions 24-52 (QRMKNRNDSDTDFSDDDEETSGGCPKMTP) are disordered. Residues 33 to 43 (DTDFSDDDEET) are compositionally biased toward acidic residues. WD repeat units lie at residues 245–284 (QNQC…RIRT), 288–328 (AHED…DGDV), 336–375 (GHRD…CQGG), 414–458 (GHSV…VSRR), and 461–500 (GHQA…EGVI). Positions 527-554 (PQRKLRKPISARNAKCPTTSSEPDDFQI) are disordered.

Belongs to the WD repeat LEC14B family.

Functionally, involved in regulation of lifespan. Required for dopaminergic CEP neuron degeneration in response to Mn(2+). This chain is DDB1- and CUL4-associated factor 11 homolog (wdr-23), found in Caenorhabditis briggsae.